The primary structure comprises 100 residues: Putative protein p52 (100 aa).

Residues 81–100 (PKSFKSSTDTAHSDRWLSLG) form a disordered region. Positions 91–100 (AHSDRWLSLG) are enriched in basic and acidic residues.

The chain is Putative protein p52 (52) from Escherichia coli (Bacteriophage APSE-1).